The sequence spans 113 residues: Hydrogenase maturation factor HypA (113 aa).

H2 contributes to the Ni(2+) binding site. Zn(2+) contacts are provided by C73, C76, C89, and C92.

The protein belongs to the HypA/HybF family.

Functionally, involved in the maturation of [NiFe] hydrogenases. Required for nickel insertion into the metal center of the hydrogenase. This chain is Hydrogenase maturation factor HypA, found in Methylocella silvestris (strain DSM 15510 / CIP 108128 / LMG 27833 / NCIMB 13906 / BL2).